The following is a 317-amino-acid chain: Tenomodulin (317 aa).

Topologically, residues 1 to 30 (MAKNPPENCEDCHILNAEAFKSKKICKSLK) are cytoplasmic. A helical; Signal-anchor for type II membrane protein membrane pass occupies residues 31 to 50 (ICGLVFGILALTLIVLFWGS). At 51–317 (KHFWPEVPKK…WWVARMLGRV (267 aa)) the chain is on the extracellular side. One can recognise a BRICHOS domain in the interval 93–186 (GNGTDETLEV…ICDNVTMYWI (94 aa)). Residue N94 is glycosylated (N-linked (GlcNAc...) asparagine). C120 and C178 form a disulfide bridge. Residue N180 is glycosylated (N-linked (GlcNAc...) asparagine). S239 carries the post-translational modification Phosphoserine.

The protein belongs to the chondromodulin-1 family. As to expression, highly expressed in hypovascular connective tissues such as tendons. Also has strong expression in adipose tissue.

The protein resides in the membrane. The protein localises to the nucleus envelope. It is found in the cytoplasm. In terms of biological role, may be an angiogenesis inhibitor. The protein is Tenomodulin (TNMD) of Homo sapiens (Human).